Consider the following 211-residue polypeptide: Urease accessory protein UreG (211 aa).

16–23 lines the GTP pocket; sequence GPVGSGKT.

The protein belongs to the SIMIBI class G3E GTPase family. UreG subfamily. Homodimer. UreD, UreF and UreG form a complex that acts as a GTP-hydrolysis-dependent molecular chaperone, activating the urease apoprotein by helping to assemble the nickel containing metallocenter of UreC. The UreE protein probably delivers the nickel.

It is found in the cytoplasm. Functionally, facilitates the functional incorporation of the urease nickel metallocenter. This process requires GTP hydrolysis, probably effectuated by UreG. This is Urease accessory protein UreG from Janthinobacterium sp. (strain Marseille) (Minibacterium massiliensis).